The following is a 31-amino-acid chain: Photosystem I reaction center subunit XII (31 aa).

A helical transmembrane segment spans residues Gln-7–Gly-26.

Belongs to the PsaM family.

The protein localises to the plastid. The protein resides in the chloroplast thylakoid membrane. The chain is Photosystem I reaction center subunit XII from Euglena myxocylindracea.